A 270-amino-acid chain; its full sequence is Putative phosphoenolpyruvate synthase regulatory protein (270 aa).

150–157 is a binding site for ADP; the sequence is GVSRCGKT.

It belongs to the pyruvate, phosphate/water dikinase regulatory protein family. PSRP subfamily.

The catalysed reaction is [pyruvate, water dikinase] + ADP = [pyruvate, water dikinase]-phosphate + AMP + H(+). The enzyme catalyses [pyruvate, water dikinase]-phosphate + phosphate + H(+) = [pyruvate, water dikinase] + diphosphate. Its function is as follows. Bifunctional serine/threonine kinase and phosphorylase involved in the regulation of the phosphoenolpyruvate synthase (PEPS) by catalyzing its phosphorylation/dephosphorylation. In Shewanella sediminis (strain HAW-EB3), this protein is Putative phosphoenolpyruvate synthase regulatory protein.